The following is a 469-amino-acid chain: 3-isopropylmalate dehydratase large subunit (469 aa).

[4Fe-4S] cluster-binding residues include Cys-350, Cys-410, and Cys-413.

Belongs to the aconitase/IPM isomerase family. LeuC type 1 subfamily. Heterodimer of LeuC and LeuD. [4Fe-4S] cluster is required as a cofactor.

It carries out the reaction (2R,3S)-3-isopropylmalate = (2S)-2-isopropylmalate. It functions in the pathway amino-acid biosynthesis; L-leucine biosynthesis; L-leucine from 3-methyl-2-oxobutanoate: step 2/4. Catalyzes the isomerization between 2-isopropylmalate and 3-isopropylmalate, via the formation of 2-isopropylmaleate. In Rhizobium meliloti (strain 1021) (Ensifer meliloti), this protein is 3-isopropylmalate dehydratase large subunit.